The primary structure comprises 437 residues: UDP-N-acetylmuramate--L-alanine ligase (437 aa).

Residue 108–114 (GAHGKTS) coordinates ATP.

It belongs to the MurCDEF family.

It is found in the cytoplasm. The enzyme catalyses UDP-N-acetyl-alpha-D-muramate + L-alanine + ATP = UDP-N-acetyl-alpha-D-muramoyl-L-alanine + ADP + phosphate + H(+). It participates in cell wall biogenesis; peptidoglycan biosynthesis. Functionally, cell wall formation. The protein is UDP-N-acetylmuramate--L-alanine ligase of Staphylococcus carnosus (strain TM300).